The primary structure comprises 252 residues: tRNA (guanine-N(7)-)-methyltransferase (252 aa).

Residues Glu51, Asp76, Asn103, and Asp125 each coordinate S-adenosyl-L-methionine. Asp125 is an active-site residue. Residues Lys129, Asp159, and 199–202 (TYYE) contribute to the substrate site.

This sequence belongs to the class I-like SAM-binding methyltransferase superfamily. TrmB family.

It catalyses the reaction guanosine(46) in tRNA + S-adenosyl-L-methionine = N(7)-methylguanosine(46) in tRNA + S-adenosyl-L-homocysteine. Its pathway is tRNA modification; N(7)-methylguanine-tRNA biosynthesis. Functionally, catalyzes the formation of N(7)-methylguanine at position 46 (m7G46) in tRNA. This chain is tRNA (guanine-N(7)-)-methyltransferase, found in Bacteroides thetaiotaomicron (strain ATCC 29148 / DSM 2079 / JCM 5827 / CCUG 10774 / NCTC 10582 / VPI-5482 / E50).